We begin with the raw amino-acid sequence, 228 residues long: Protein N-lysine methyltransferase METTL21D (228 aa).

Ala2 is modified (N-acetylalanine). S-adenosyl-L-methionine-binding positions include Trp43, 75-77 (GSG), Asp96, Trp126, Ala142, and Tyr147.

The protein belongs to the methyltransferase superfamily. METTL21 family. In terms of assembly, interacts with ALKBH6. Interacts with ASPSCR1 and UBXN6; interaction with ASPSCR1, but not with UBXN6, enhances VCP methylation. Widely expressed.

The protein localises to the cytoplasm. It catalyses the reaction L-lysyl-[protein] + 3 S-adenosyl-L-methionine = N(6),N(6),N(6)-trimethyl-L-lysyl-[protein] + 3 S-adenosyl-L-homocysteine + 3 H(+). Its function is as follows. Protein N-lysine methyltransferase that specifically trimethylates 'Lys-315' of VCP/p97; this modification may decrease VCP ATPase activity. The polypeptide is Protein N-lysine methyltransferase METTL21D (Vcpkmt) (Mus musculus (Mouse)).